The primary structure comprises 270 residues: Type III pantothenate kinase (270 aa).

Residue 6 to 13 (DVRNTHTV) participates in ATP binding. 109-112 (GADR) is a binding site for substrate. Asp111 functions as the Proton acceptor in the catalytic mechanism. Asp131 serves as a coordination point for K(+). Ser134 is an ATP binding site. Thr186 serves as a coordination point for substrate.

Belongs to the type III pantothenate kinase family. In terms of assembly, homodimer. Requires NH4(+) as cofactor. K(+) is required as a cofactor.

Its subcellular location is the cytoplasm. The enzyme catalyses (R)-pantothenate + ATP = (R)-4'-phosphopantothenate + ADP + H(+). Its pathway is cofactor biosynthesis; coenzyme A biosynthesis; CoA from (R)-pantothenate: step 1/5. In terms of biological role, catalyzes the phosphorylation of pantothenate (Pan), the first step in CoA biosynthesis. This chain is Type III pantothenate kinase, found in Mycolicibacterium gilvum (strain PYR-GCK) (Mycobacterium gilvum (strain PYR-GCK)).